The sequence spans 144 residues: Probable disulfide formation protein (144 aa).

A helical membrane pass occupies residues 10 to 29 (WNLLLLTWLVALISTLSALF). Residues C39 and C42 are joined by a disulfide bond. The next 2 helical transmembrane spans lie at 44-63 (FQRA…CYRS) and 70-87 (YALP…VHTL). Cysteines 100 and 107 form a disulfide. The chain crosses the membrane as a helical span at residues 116–138 (GVVPLPALALFAFIIIAILLIII).

Belongs to the DsbB family. BdbC subfamily.

It is found in the cell inner membrane. Required for disulfide bond formation in some proteins. In Metapseudomonas resinovorans (Pseudomonas resinovorans), this protein is Probable disulfide formation protein.